The primary structure comprises 83 residues: MDKLISLKDVMRFIFKFGLPGLCIAVGLIVMVANKWLGIPWPCYVIVGSVSLSFGLILFIVQTIKEIIIYRKEKKDENIYSKK.

This sequence belongs to the microviridae C protein family.

Functionally, plays a central role in the packaging of viral DNA into phage procapsid, which occurs in the late stage of infection. Can interact with the replicative complex after the completion of one round of DNA synthesis. When protein ORF5 is bound to the replicative form, the complex becomes accessible to procapsid and serves as a DNA packaging apparatus. The chain is Protein ORF5 from Spiroplasma melliferum (SpV4).